The following is a 319-amino-acid chain: Ribosomal RNA small subunit methyltransferase H (319 aa).

S-adenosyl-L-methionine-binding positions include 37–39, aspartate 57, phenylalanine 96, aspartate 105, and glutamine 112; that span reads GGY. Over residues 292-302 the composition is skewed to basic and acidic residues; that stretch reads RPDEREKERNP. A disordered region spans residues 292–319; sequence RPDEREKERNPRSRSARLRAVEKQGVPA.

This sequence belongs to the methyltransferase superfamily. RsmH family.

The protein resides in the cytoplasm. The catalysed reaction is cytidine(1402) in 16S rRNA + S-adenosyl-L-methionine = N(4)-methylcytidine(1402) in 16S rRNA + S-adenosyl-L-homocysteine + H(+). Functionally, specifically methylates the N4 position of cytidine in position 1402 (C1402) of 16S rRNA. In Syntrophobacter fumaroxidans (strain DSM 10017 / MPOB), this protein is Ribosomal RNA small subunit methyltransferase H.